The sequence spans 484 residues: RNA polymerase sigma-54 factor 1 (484 aa).

The H-T-H motif DNA-binding region spans 355–374 (NLKAVAEAIQMHESTVSRVT). An RPON box motif is present at residues 444–452 (ARRTVAKYR). The disordered stretch occupies residues 464–484 (RRDNMWSTMNSRASGGTGLDK). Polar residues predominate over residues 468–477 (MWSTMNSRAS).

Belongs to the sigma-54 factor family.

Functionally, sigma factors are initiation factors that promote the attachment of RNA polymerase to specific initiation sites and are then released. This sigma factor is responsible for the expression of the nitrogen fixation genes. In Bradyrhizobium diazoefficiens (strain JCM 10833 / BCRC 13528 / IAM 13628 / NBRC 14792 / USDA 110), this protein is RNA polymerase sigma-54 factor 1 (rpoN1).